We begin with the raw amino-acid sequence, 314 residues long: tRNA dimethylallyltransferase (314 aa).

Position 13 to 20 (13 to 20) interacts with ATP; it reads GPTAIGKT. 15–20 is a binding site for substrate; that stretch reads TAIGKT. An interaction with substrate tRNA region spans residues 38 to 41; the sequence is DSMQ.

This sequence belongs to the IPP transferase family. As to quaternary structure, monomer. Mg(2+) is required as a cofactor.

The catalysed reaction is adenosine(37) in tRNA + dimethylallyl diphosphate = N(6)-dimethylallyladenosine(37) in tRNA + diphosphate. Its function is as follows. Catalyzes the transfer of a dimethylallyl group onto the adenine at position 37 in tRNAs that read codons beginning with uridine, leading to the formation of N6-(dimethylallyl)adenosine (i(6)A). This Desulfotalea psychrophila (strain LSv54 / DSM 12343) protein is tRNA dimethylallyltransferase.